The sequence spans 323 residues: MGNRVSREDFEWVYTDQPHATRRQEILAKYPEIKSLMKPDSNLIWIVIMMVLTQFVAFYLVKDLDWKWVLFWAYAFGSCVNHSMTLAIHEVSHNSAFGHYKAMWNRWFGIFANLPIGVPYSVSFKRYHMDHHRYLGADGIDVDIPTDFEGWFFCTTFRKFIWVILQPLFYAFRPLFINPKPISYLEIINTVIQITFDIVVYYVLGVKSLVYMLAASLFGLGLHPISGHFIAEHYMFLKGHETYSYYGPLNLLTFNVGYHNEHHDFPNIPGKSLPLVRKIAAEYYDNLPHYNSWIKVLYDFVTDDTISPYSRMKRHLKGNEVQE.

Residue glycine 2 is the site of N-myristoyl glycine attachment. Helical transmembrane passes span 41–61 and 68–88; these read SNLI…FYLV and WVLF…TLAI. The Histidine box-1 signature appears at 89–93; the sequence is HEVSH. A helical membrane pass occupies residues 102 to 122; that stretch reads AMWNRWFGIFANLPIGVPYSV. Residues 128–132 carry the Histidine box-2 motif; the sequence is HMDHH. 3 consecutive transmembrane segments (helical) span residues 152-172, 184-204, and 209-229; these read FFCT…FYAF, YLEI…YYVL, and LVYM…SGHF. Residues 259-263 carry the Histidine box-3 motif; the sequence is HNEHH. At serine 307 the chain carries Phosphoserine.

It belongs to the fatty acid desaturase type 1 family. DEGS subfamily. In terms of assembly, interacts with RLBP1; the interaction increases synthesis of chromophore-precursors by DEGS1. Myristoylation can target the enzyme to the mitochondria leading to an increase in ceramide levels.

Its subcellular location is the mitochondrion membrane. It localises to the endoplasmic reticulum membrane. It carries out the reaction an N-acylsphinganine + 2 Fe(II)-[cytochrome b5] + O2 + 2 H(+) = an N-acylsphing-4-enine + 2 Fe(III)-[cytochrome b5] + 2 H2O. The enzyme catalyses all-trans-retinol = 11-cis-retinol. It catalyses the reaction all-trans-retinol = 9-cis-retinol. The catalysed reaction is all-trans-retinol = 13-cis-retinol. It carries out the reaction 11-cis-retinol = 13-cis-retinol. The enzyme catalyses 11-cis-retinol = 9-cis-retinol. Has sphingolipid-delta-4-desaturase activity. Converts D-erythro-sphinganine to D-erythro-sphingosine (E-sphing-4-enine). Catalyzes the equilibrium isomerization of retinols. The protein is Sphingolipid delta(4)-desaturase DES1 (DEGS1) of Bos taurus (Bovine).